The primary structure comprises 107 residues: MSELAEKECVPCKGGVPPLKGEELERLARQLPGWEVVDEHHLRRSFRFRNFREALDFVNRVGELAEEQNHHPDICFGWGRAEITVFTHKIDGLTESDFVFAAKVDRL.

It belongs to the pterin-4-alpha-carbinolamine dehydratase family.

It catalyses the reaction (4aS,6R)-4a-hydroxy-L-erythro-5,6,7,8-tetrahydrobiopterin = (6R)-L-erythro-6,7-dihydrobiopterin + H2O. This Rubrobacter xylanophilus (strain DSM 9941 / JCM 11954 / NBRC 16129 / PRD-1) protein is Putative pterin-4-alpha-carbinolamine dehydratase.